We begin with the raw amino-acid sequence, 124 residues long: Trophoblast-specific protein alpha (124 aa).

The N-terminal stretch at 1–18 is a signal peptide; it reads MTPTIFLVILCLGVASAV. Disordered stretches follow at residues 51-74 and 91-124; these read KLHSSENDQETEGSNIEMSASGQL and FEEEENKPQPVVDDPEFEDYTESGDGFFVPNQPQ. The segment covering 62–74 has biased composition (polar residues); the sequence is EGSNIEMSASGQL. A compositionally biased stretch (acidic residues) spans 103–112; it reads DDPEFEDYTE.

The protein resides in the secreted. The protein localises to the extracellular space. Its function is as follows. It may be a growth factor/hormone, perhaps involved in interaction between the maternal and fetal systems in maintenance of pregnancy. This is Trophoblast-specific protein alpha (Tpbpa) from Mus musculus (Mouse).